Consider the following 395-residue polypeptide: MTNINTVLAELKRGTDEILSEADLIEKLKENRPLKVKLGADPTAPDIHLGHTVVLNKLRQFQQLGHEVYFLIGDFTGMVGDPSGKNATRPPLSREDVLRNAETYKEQIYKILDPQKTKIVFNSEWLSKLGTEGMIRLASNYTVARMLERDDFKKRFGNNQPIAIHEFIYPLLQGYDSVALDADVELGGTDQKFNLLVGRELQKSAGKKPQVAITLPLLVGLDGEKKMSKSLGNYIGVTEAPSDMFGKVMSISDELMWDWYNLLSFRPLSEIAQLKSEVEKGKNPRDVKILLAKELIARFHNEEAANAAEQEFINRFQKGAMPDEMPEFTFSGEIGLATLLKEAGLVPSTSEAIRSAQQGGVKINGEKVDNVKDNAPKGTNVYQVGKRKFARVTVE.

The short motif at 42-51 (PTAPDIHLGH) is the 'HIGH' region element. The 'KMSKS' region signature appears at 226–230 (KMSKS). Position 229 (Lys229) interacts with ATP. The S4 RNA-binding domain maps to 334–394 (IGLATLLKEA…GKRKFARVTV (61 aa)).

This sequence belongs to the class-I aminoacyl-tRNA synthetase family. TyrS type 2 subfamily. Homodimer.

The protein localises to the cytoplasm. The enzyme catalyses tRNA(Tyr) + L-tyrosine + ATP = L-tyrosyl-tRNA(Tyr) + AMP + diphosphate + H(+). Functionally, catalyzes the attachment of tyrosine to tRNA(Tyr) in a two-step reaction: tyrosine is first activated by ATP to form Tyr-AMP and then transferred to the acceptor end of tRNA(Tyr). This chain is Tyrosine--tRNA ligase, found in Haemophilus influenzae (strain 86-028NP).